The following is a 406-amino-acid chain: Secretion apparatus protein BsaZ (406 aa).

4 consecutive transmembrane segments (helical) span residues 28–48 (IVALIVIATGALAAPALVDLT), 80–100 (IAAPFVLLCAAAGALPSLVQS), 137–157 (ALLYVGVFALTVRVFAGLYHA), and 175–195 (IVLTVRLVLLFLLCALPVLIL). The disordered stretch occupies residues 341 to 406 (AANRGGPPPE…APARTGDQNA (66 aa)). Positions 370-399 (DACADNAFPDDAPPGAAAPNAGSPDGGAPA) are enriched in low complexity.

The protein belongs to the type III secretion exporter family.

It localises to the cell membrane. In terms of biological role, part of the bsa type III secretion system, is involved in the intracellular replication of invading bacteria inside the host cell. Probably necessary for the lysis of the vacuole membrane and escape into the host cell cytoplasm. In Burkholderia pseudomallei (strain 668), this protein is Secretion apparatus protein BsaZ (bsaZ).